The chain runs to 533 residues: Probable nucleolar protein 5-2 (533 aa).

Residues 281 to 399 form the Nop domain; the sequence is IAPNLTALVG…LEARLRNLEG (119 aa). 2 disordered regions span residues 401–433 and 445–533; these read DLGR…ITPA and GETS…KSKD. Basic and acidic residues predominate over residues 413-424; sequence PKIEVYNKDKKM. Residues 521 to 533 are compositionally biased toward basic residues; it reads KKDKKEKKKKSKD.

Belongs to the NOP5/NOP56 family.

The protein localises to the nucleus. Its subcellular location is the nucleolus. Functionally, required for 60S ribosomal subunit biogenesis. In Arabidopsis thaliana (Mouse-ear cress), this protein is Probable nucleolar protein 5-2 (NOP5-2).